The primary structure comprises 364 residues: DNA replication and repair protein RecF (364 aa).

ATP is bound at residue 30–37; sequence GNNAQGKT.

This sequence belongs to the RecF family.

It localises to the cytoplasm. Functionally, the RecF protein is involved in DNA metabolism; it is required for DNA replication and normal SOS inducibility. RecF binds preferentially to single-stranded, linear DNA. It also seems to bind ATP. The polypeptide is DNA replication and repair protein RecF (Streptococcus uberis (strain ATCC BAA-854 / 0140J)).